Here is a 224-residue protein sequence, read N- to C-terminus: 7-cyano-7-deazaguanine synthase (224 aa).

12 to 22 (LSGGLDSSTVT) provides a ligand contact to ATP. The Zn(2+) site is built by C193, C201, C204, and C207.

The protein belongs to the QueC family. Requires Zn(2+) as cofactor.

The catalysed reaction is 7-carboxy-7-deazaguanine + NH4(+) + ATP = 7-cyano-7-deazaguanine + ADP + phosphate + H2O + H(+). It functions in the pathway purine metabolism; 7-cyano-7-deazaguanine biosynthesis. In terms of biological role, catalyzes the ATP-dependent conversion of 7-carboxy-7-deazaguanine (CDG) to 7-cyano-7-deazaguanine (preQ(0)). This Prochlorococcus marinus subsp. pastoris (strain CCMP1986 / NIES-2087 / MED4) protein is 7-cyano-7-deazaguanine synthase.